Reading from the N-terminus, the 258-residue chain is UPF0246 protein VV0659 (258 aa).

Belongs to the UPF0246 family.

The protein is UPF0246 protein VV0659 of Vibrio vulnificus (strain YJ016).